Here is a 46-residue protein sequence, read N- to C-terminus: Protein PsbN (46 aa).

A helical transmembrane segment spans residues 10–30; sequence LAIIVLVVLLGLTGLGVYMAF.

Belongs to the PsbN family.

Its subcellular location is the cellular thylakoid membrane. Its function is as follows. May play a role in photosystem I and II biogenesis. This Prochlorococcus marinus (strain MIT 9211) protein is Protein PsbN.